A 447-amino-acid polypeptide reads, in one-letter code: GTPase Der (447 aa).

EngA-type G domains follow at residues 3–167 (PVVA…HLED) and 180–353 (IKLA…KAAN). GTP contacts are provided by residues 9 to 16 (GRPNVGKS), 56 to 60 (DTGGF), 119 to 122 (NKAE), 186 to 193 (GRPNVGKS), 233 to 237 (DTAGL), and 298 to 301 (NKWD). One can recognise a KH-like domain in the interval 354–438 (CKMSTPILTR…PMRIEFKSST (85 aa)).

The protein belongs to the TRAFAC class TrmE-Era-EngA-EngB-Septin-like GTPase superfamily. EngA (Der) GTPase family. As to quaternary structure, associates with the 50S ribosomal subunit.

In terms of biological role, GTPase that plays an essential role in the late steps of ribosome biogenesis. The sequence is that of GTPase Der from Albidiferax ferrireducens (strain ATCC BAA-621 / DSM 15236 / T118) (Rhodoferax ferrireducens).